We begin with the raw amino-acid sequence, 512 residues long: Phospho-2-dehydro-3-deoxyheptonate aldolase 2, chloroplastic (512 aa).

A chloroplast-targeting transit peptide spans 1 to 57 (MALTATATTRGGSALPNSCLQTPKFQSLQKPTFISSFPTNKKTKPRTKHISAVQSPP). Residues 37-57 (FPTNKKTKPRTKHISAVQSPP) form a disordered region. Position 126 (C126) interacts with Mn(2+). Substrate is bound by residues R165, 324–325 (ER), K347, and R378. 3 residues coordinate Mn(2+): H410, E452, and D482.

The protein belongs to the class-II DAHP synthase family. As to quaternary structure, homodimer. Requires Mn(2+) as cofactor. In terms of tissue distribution, mostly expressed in leaves and stems, and, to a lower extent, in roots, stigmas, anthers, petal tubes, petal limbs and sepals.

It localises to the plastid. Its subcellular location is the chloroplast. The catalysed reaction is D-erythrose 4-phosphate + phosphoenolpyruvate + H2O = 7-phospho-2-dehydro-3-deoxy-D-arabino-heptonate + phosphate. The protein operates within metabolic intermediate biosynthesis; chorismate biosynthesis; chorismate from D-erythrose 4-phosphate and phosphoenolpyruvate: step 1/7. Involved in the production of volatile organic compounds (VOCs). Catalyzes an aldol-like condensation reaction between phosphoenolpyruvate (PEP) and D-erythrose 4-phosphate (E4P) to generate 3-deoxy-D-arabino-heptulosonate 7-phosphate (DAH7P) and inorganic phosphate. This is Phospho-2-dehydro-3-deoxyheptonate aldolase 2, chloroplastic from Petunia hybrida (Petunia).